Consider the following 434-residue polypeptide: Probable exopolygalacturonase A (434 aa).

Residues Met1–Ser19 form the signal peptide. Asn46, Asn57, Asn106, Asn199, and Asn207 each carry an N-linked (GlcNAc...) asparagine glycan. One copy of the PbH1 1 repeat lies at Ser232–Pro253. Residue Asp246 is the Proton donor of the active site. Cys248 and Cys265 are oxidised to a cystine. An N-linked (GlcNAc...) asparagine glycan is attached at Asn254. The stretch at Ser255–Ser275 is one PbH1 2 repeat. Residue His269 is part of the active site. Asn293, Asn329, and Asn354 each carry an N-linked (GlcNAc...) asparagine glycan. An intrachain disulfide couples Cys392 to Cys398. Asn400 is a glycosylation site (N-linked (GlcNAc...) asparagine).

The protein belongs to the glycosyl hydrolase 28 family.

Its subcellular location is the secreted. The catalysed reaction is [(1-&gt;4)-alpha-D-galacturonosyl](n) + H2O = alpha-D-galacturonate + [(1-&gt;4)-alpha-D-galacturonosyl](n-1). In terms of biological role, specific in hydrolyzing the terminal glycosidic bond of polygalacturonic acid and oligogalacturonates. The protein is Probable exopolygalacturonase A (pgxA) of Aspergillus niger (strain ATCC MYA-4892 / CBS 513.88 / FGSC A1513).